Reading from the N-terminus, the 620-residue chain is Schwann cell myelin protein (620 aa).

A signal peptide spans 1-17; that stretch reads MELLVLTVLLMGTGCIS. The Extracellular portion of the chain corresponds to 18–516; sequence APWAAWMPPK…GGLVWAKVGP (499 aa). The Ig-like V-type domain maps to 28–106; sequence MAALSGTCVQ…RDCTLNIARL (79 aa). 3 cysteine pairs are disulfide-bonded: Cys35–Cys164, Cys40–Cys99, and Cys158–Cys216. Arg117 contributes to the N-acetylneuraminate binding site. 4 consecutive Ig-like C2-type domains span residues 151–233, 239–322, 325–407, and 414–495; these read GSEA…DVGL, PQVV…LRVA, PRAP…FNIS, and VLPA…NRHG. Residue Asn222 is glycosylated (N-linked (GlcNAc...) asparagine). A disulfide bridge connects residues Cys260 and Cys304. N-linked (GlcNAc...) asparagine glycosylation is found at Asn314 and Asn331. Cys346 and Cys391 are oxidised to a cystine. Asn405 carries an N-linked (GlcNAc...) asparagine glycan. 2 cysteine pairs are disulfide-bonded: Cys420–Cys429 and Cys431–Cys488. An N-linked (GlcNAc...) asparagine glycan is attached at Asn449. A helical transmembrane segment spans residues 517 to 536; sequence VGAVVAFAIVIAVVCYLSQS. The Cytoplasmic portion of the chain corresponds to 537 to 620; sequence RRKKGAGSPE…PPEYAEIRVK (84 aa). Disordered regions lie at residues 539–562 and 583–620; these read KKGAGSPEVTPVQPMAGPGGDPDL and VKEGSGAPQEVTPTSHPPMKPTRGPLEDPPEYAEIRVK.

Belongs to the immunoglobulin superfamily. SIGLEC (sialic acid binding Ig-like lectin) family. Exclusively expressed by myelinating and nonmyelinating Schwann cells and oligodendrocytes.

The protein resides in the membrane. This chain is Schwann cell myelin protein (SMP), found in Coturnix japonica (Japanese quail).